The following is a 372-amino-acid chain: Chaperone protein DnaJ (372 aa).

One can recognise a J domain in the interval Asp-5–Gly-70. Residues Gly-134–Glu-212 form a CR-type zinc finger. Zn(2+)-binding residues include Cys-147, Cys-150, Cys-164, Cys-167, Cys-186, Cys-189, Cys-200, and Cys-203. CXXCXGXG motif repeat units follow at residues Cys-147 to Gly-154, Cys-164 to Gly-171, Cys-186 to Gly-193, and Cys-200 to Gly-207.

This sequence belongs to the DnaJ family. In terms of assembly, homodimer. Requires Zn(2+) as cofactor.

It is found in the cytoplasm. Participates actively in the response to hyperosmotic and heat shock by preventing the aggregation of stress-denatured proteins and by disaggregating proteins, also in an autonomous, DnaK-independent fashion. Unfolded proteins bind initially to DnaJ; upon interaction with the DnaJ-bound protein, DnaK hydrolyzes its bound ATP, resulting in the formation of a stable complex. GrpE releases ADP from DnaK; ATP binding to DnaK triggers the release of the substrate protein, thus completing the reaction cycle. Several rounds of ATP-dependent interactions between DnaJ, DnaK and GrpE are required for fully efficient folding. Also involved, together with DnaK and GrpE, in the DNA replication of plasmids through activation of initiation proteins. The polypeptide is Chaperone protein DnaJ (Wolbachia sp. subsp. Drosophila simulans (strain wRi)).